Reading from the N-terminus, the 106-residue chain is uncharacterized protein (106 aa).

This sequence belongs to the HesB/IscA family.

This is an uncharacterized protein from Bradyrhizobium diazoefficiens (strain JCM 10833 / BCRC 13528 / IAM 13628 / NBRC 14792 / USDA 110).